A 424-amino-acid polypeptide reads, in one-letter code: 3-ketoacyl-CoA thiolase A, peroxisomal (424 aa).

The N-terminal 26 residues, 1–26 (MHRLQVVLGHLAGRPESSSALQAAPC), are a transit peptide targeting the peroxisome. Residues 1-26 (MHRLQVVLGHLAGRPESSSALQAAPC) form a PTS2-type peroxisomal targeting signal region. The Acyl-thioester intermediate role is filled by Cys-123. An N6-acetyllysine mark is found at Lys-173 and Lys-234. Residues His-377 and Cys-408 each act as proton acceptor in the active site.

It belongs to the thiolase-like superfamily. Thiolase family. Homodimer. Interacts (via PTS2-type peroxisomal targeting signal region) with PEX7; leading to its translocation into peroxisomes. In terms of tissue distribution, mainly expressed in liver and intestine.

Its subcellular location is the peroxisome. It catalyses the reaction an acyl-CoA + acetyl-CoA = a 3-oxoacyl-CoA + CoA. The catalysed reaction is 2 acetyl-CoA = acetoacetyl-CoA + CoA. The enzyme catalyses tetradecanoyl-CoA + acetyl-CoA = 3-oxohexadecanoyl-CoA + CoA. It carries out the reaction hexanoyl-CoA + acetyl-CoA = 3-oxooctanoyl-CoA + CoA. It catalyses the reaction 3-oxohexadecanedioyl-CoA + CoA = tetradecanedioyl-CoA + acetyl-CoA. The catalysed reaction is 3-oxo-(6Z,9Z,12Z,15Z,18Z,21Z)-tetracosahexaenoyl-CoA + CoA = (4Z,7Z,10Z,13Z,16Z,19Z)-docosahexaenoyl-CoA + acetyl-CoA. The protein operates within lipid metabolism; peroxisomal fatty acid beta-oxidation. Its function is as follows. Responsible for the thiolytic cleavage of straight chain 3-keto fatty acyl-CoAs (3-oxoacyl-CoAs). Plays an important role in fatty acid peroxisomal beta-oxidation. Catalyzes the cleavage of short, medium, long, and very long straight chain 3-oxoacyl-CoAs. This is 3-ketoacyl-CoA thiolase A, peroxisomal from Mus musculus (Mouse).